The following is a 717-amino-acid chain: MAATAAVPGAAAGRASKRGGGGSGGGGTQGAEEEPPPPLQAVLVADSFNRRFFPISKDQPRVLLPLANVALIDYTLEFLTATGVQETFVFCCWKAAQIKEHLQKSKWCHPTSPNVVRIITSELYRSLGDVLRDVDAKALVRSDFLLIYGDVISNINICRALEEHRLRRKLEKNVSVMTMVFKESSPSHPTRCHEDNVVMAVDSATNRVLHFQKTQGLRRFSFPLSLFQGSGDGVEIRYDLLDCHISICSPQVAQLFTDNFDYQTRDDFVRGILMNEEVLGNQIHLHVTTREYGARVSNLHMYSAVCADVIRRWVYPLTPEVNFTDSTTQSYTHSRHNIYRGPEVSLGHGSVLEENVLLGAGTVIGSNCSITNSVIGPNCHIGDNVVLDQAYLWQGVRVAAGAQIHQSLLCDRAEVKERVKLKPYCVLTSQVVVGPDITLPEGSVISLHPPDAEEDEDDGQFSDDSGADQEKEKVKLKGYNPAEVGLEGQGYLWKAEGVNSKEDEELRQSLWGLMIKTEEESETESEGSVDPEELDSRAGSPQLDDIRVFQNEVLGTLQRGREENISCENLVLEINSLKHAYNISLKEVMQVLTLVVLEFPLQQVDGLLDPNRYCALLLPLLKAWSPVLRNYIKRAADHLEALAAIEDFFLEHETLVTSMAKVLMAFYQLEILAEETILSWFSQRDTTDEGQQLRKNQQLQRFIQWLREAEEESSEDD.

Over residues 1–14 (MAATAAVPGAAAGR) the composition is skewed to low complexity. The segment at 1-37 (MAATAAVPGAAAGRASKRGGGGSGGGGTQGAEEEPPP) is disordered. Position 18 is an omega-N-methylarginine (Arg18). Over residues 18 to 29 (RGGGGSGGGGTQ) the composition is skewed to gly residues. Ser23 is subject to Phosphoserine. Residues Lys57 and Lys99 each participate in a glycyl lysine isopeptide (Lys-Gly) (interchain with G-Cter in ubiquitin) cross-link. The residue at position 126 (Ser126) is a Phosphoserine. Glycyl lysine isopeptide (Lys-Gly) (interchain with G-Cter in ubiquitin) cross-links involve residues Lys137 and Lys213. Thr318 is subject to Phosphothreonine. Positions 442–479 (GSVISLHPPDAEEDEDDGQFSDDSGADQEKEKVKLKGY) are disordered. A phosphoserine mark is found at Ser446, Ser462, and Ser465. The span at 452–467 (AEEDEDDGQFSDDSGA) shows a compositional bias: acidic residues. Lys501 is covalently cross-linked (Glycyl lysine isopeptide (Lys-Gly) (interchain with G-Cter in ubiquitin)). Residues 517–538 (TEEESETESEGSVDPEELDSRA) form a disordered region. A compositionally biased stretch (acidic residues) spans 519–533 (EESETESEGSVDPEE). Phosphoserine is present on residues Ser528 and Ser536. A W2 domain is found at 539–716 (GSPQLDDIRV…REAEEESSED (178 aa)). Ser540 is modified (phosphoserine; by DYRK2). Ser713 is modified (phosphoserine).

The protein belongs to the eIF-2B gamma/epsilon subunits family. Component of the translation initiation factor 2B (eIF2B) complex which is a heterodecamer of two sets of five different subunits: alpha, beta, gamma, delta and epsilon. Subunits alpha, beta and delta comprise a regulatory subcomplex and subunits epsilon and gamma comprise a catalytic subcomplex. Within the complex, the hexameric regulatory complex resides at the center, with the two heterodimeric catalytic subcomplexes bound on opposite sides. Post-translationally, phosphorylated at Ser-540 by DYRK2; this is required for subsequent phosphorylation by GSK3B. Phosphorylated on serine and threonine residues by GSK3B; phosphorylation inhibits its function. Polyubiquitinated, probably by NEDD4.

It is found in the cytoplasm. It localises to the cytosol. Activated by the chemical integrated stress response (ISR) inhibitor ISRIB which stimulates guanine nucleotide exchange factor activity for both phosphorylated and unphosphorylated eIF2. In terms of biological role, acts as a component of the translation initiation factor 2B (eIF2B) complex, which catalyzes the exchange of GDP for GTP on eukaryotic initiation factor 2 (eIF2) gamma subunit. Its guanine nucleotide exchange factor activity is repressed when bound to eIF2 complex phosphorylated on the alpha subunit, thereby limiting the amount of methionyl-initiator methionine tRNA available to the ribosome and consequently global translation is repressed. In Mus musculus (Mouse), this protein is Translation initiation factor eIF2B subunit epsilon (Eif2b5).